The sequence spans 762 residues: Poly(A) RNA polymerase CID14 (762 aa).

The disordered stretch occupies residues 1-123 (MPTGFQPAES…KKEEQKAAER (123 aa)). Residues 50 to 62 (KKNKKDKKKKGSK) show a composition bias toward basic residues. Composition is skewed to basic and acidic residues over residues 65 to 75 (QPVDEPDKKDG) and 99 to 123 (RKRD…AAER). Ser-189 is an ATP binding site. Positions 200 and 202 each coordinate Mg(2+). ATP is bound by residues Gly-266, Lys-291, Ser-309, and Tyr-310. The 58-residue stretch at 336–393 (NLGTLLIEFFELFGRNFNYNDVGISIRRGGFYFSKASRGWMKGQSFLLSIEDPQDKDN) folds into the PAP-associated domain. The tract at residues 482 to 762 (SIPLGADPKP…LGQSSGDMSD (281 aa)) is disordered. Residues 536-549 (VEDDELESDDDSDS) are compositionally biased toward acidic residues. Residues 572–581 (RTANSRSTSR) are compositionally biased toward polar residues. Lys-610 provides a ligand contact to ATP. Composition is skewed to acidic residues over residues 677–687 (GEEEEEIDSDE) and 697–707 (SDGDLGSEDEI). A compositionally biased stretch (polar residues) spans 753-762 (LGQSSGDMSD).

The protein belongs to the DNA polymerase type-B-like family. Component of the TRAMP complex. Requires Mg(2+) as cofactor. Mn(2+) is required as a cofactor.

It is found in the nucleus. The protein resides in the nucleolus. It carries out the reaction RNA(n) + ATP = RNA(n)-3'-adenine ribonucleotide + diphosphate. Required for 3' polyadenylation of the 5.8S and 25S rRNAs as a prelude to their degradation in the exosome. Involved in the nucleolar organization to ensure faithful chromosome segregation during mitosis. In Cryptococcus neoformans var. neoformans serotype D (strain JEC21 / ATCC MYA-565) (Filobasidiella neoformans), this protein is Poly(A) RNA polymerase CID14.